Reading from the N-terminus, the 386-residue chain is GTPase Obg (386 aa).

The region spanning 1–159 (MKFIDEARIE…RTLKLELKVL (159 aa)) is the Obg domain. Residues 160–348 (ADVGLLGMPN…LTFAIMSYLD (189 aa)) form the OBG-type G domain. GTP contacts are provided by residues 166–173 (GMPNAGKS), 191–195 (FTTLH), 213–216 (DIPG), 284–287 (NKVD), and 329–331 (SAL). Positions 173 and 193 each coordinate Mg(2+).

Belongs to the TRAFAC class OBG-HflX-like GTPase superfamily. OBG GTPase family. As to quaternary structure, monomer. Mg(2+) serves as cofactor.

The protein resides in the cytoplasm. Functionally, an essential GTPase which binds GTP, GDP and possibly (p)ppGpp with moderate affinity, with high nucleotide exchange rates and a fairly low GTP hydrolysis rate. Plays a role in control of the cell cycle, stress response, ribosome biogenesis and in those bacteria that undergo differentiation, in morphogenesis control. The chain is GTPase Obg from Chromobacterium violaceum (strain ATCC 12472 / DSM 30191 / JCM 1249 / CCUG 213 / NBRC 12614 / NCIMB 9131 / NCTC 9757 / MK).